Consider the following 155-residue polypeptide: 6,7-dimethyl-8-ribityllumazine synthase (155 aa).

5-amino-6-(D-ribitylamino)uracil contacts are provided by residues F18, 49–51 (ALE), and 75–77 (CVI). Position 80–81 (80–81 (ET)) interacts with (2S)-2-hydroxy-3-oxobutyl phosphate. H83 serves as the catalytic Proton donor. N108 contributes to the 5-amino-6-(D-ribitylamino)uracil binding site. Residue R122 coordinates (2S)-2-hydroxy-3-oxobutyl phosphate.

The protein belongs to the DMRL synthase family.

It catalyses the reaction (2S)-2-hydroxy-3-oxobutyl phosphate + 5-amino-6-(D-ribitylamino)uracil = 6,7-dimethyl-8-(1-D-ribityl)lumazine + phosphate + 2 H2O + H(+). The protein operates within cofactor biosynthesis; riboflavin biosynthesis; riboflavin from 2-hydroxy-3-oxobutyl phosphate and 5-amino-6-(D-ribitylamino)uracil: step 1/2. Functionally, catalyzes the formation of 6,7-dimethyl-8-ribityllumazine by condensation of 5-amino-6-(D-ribitylamino)uracil with 3,4-dihydroxy-2-butanone 4-phosphate. This is the penultimate step in the biosynthesis of riboflavin. This is 6,7-dimethyl-8-ribityllumazine synthase from Bartonella henselae (strain ATCC 49882 / DSM 28221 / CCUG 30454 / Houston 1) (Rochalimaea henselae).